Reading from the N-terminus, the 181-residue chain is Adenine phosphoribosyltransferase (181 aa).

It belongs to the purine/pyrimidine phosphoribosyltransferase family. Homodimer.

Its subcellular location is the cytoplasm. It carries out the reaction AMP + diphosphate = 5-phospho-alpha-D-ribose 1-diphosphate + adenine. Its pathway is purine metabolism; AMP biosynthesis via salvage pathway; AMP from adenine: step 1/1. In terms of biological role, catalyzes a salvage reaction resulting in the formation of AMP, that is energically less costly than de novo synthesis. The sequence is that of Adenine phosphoribosyltransferase from Methylorubrum populi (strain ATCC BAA-705 / NCIMB 13946 / BJ001) (Methylobacterium populi).